An 83-amino-acid polypeptide reads, in one-letter code: Hainantoxin-III 5 (83 aa).

The N-terminal stretch at 1 to 21 is a signal peptide; sequence MKASRFLALAGLVLLFVVGYA. Positions 22–48 are excised as a propeptide; that stretch reads SESEEKEFPRELLSKIFAVDDFKGEER. 3 disulfide bridges follow: cysteine 50-cysteine 65, cysteine 57-cysteine 70, and cysteine 64-cysteine 77. Leucine 81 is modified (leucine amide).

The protein belongs to the neurotoxin 10 (Hwtx-1) family. 15 (Hntx-3) subfamily. In terms of assembly, monomer. As to expression, expressed by the venom gland.

Its subcellular location is the secreted. In terms of biological role, selective antagonist of neuronal tetrodotoxin (TTX)-sensitive voltage-gated sodium channels (IC(50)=1270 nM on Nav1.1/SCN1A, 270 nM on Nav1.2/SCN2A, 491 nM on Nav1.3/SCN3A and 232 nM on Nav1.7/SCN9A). This toxin suppress Nav1.7 current amplitude without significantly altering the activation, inactivation, and repriming kinetics. Short extreme depolarizations partially activate the toxin-bound channel, indicating voltage-dependent inhibition of this toxin. This toxin increases the deactivation of the Nav1.7 current after extreme depolarizations. The toxin-Nav1.7 complex is gradually dissociated upon prolonged strong depolarizations in a voltage-dependent manner, and the unbound toxin rebinds to Nav1.7 after a long repolarization. Moreover, analysis of chimeric channels showed that the DIIS3-S4 linker is critical for toxin binding to Nav1.7. These data are consistent with this toxin interacting with Nav1.7 site 4 and trapping the domain II voltage sensor in the closed state. This is Hainantoxin-III 5 from Cyriopagopus hainanus (Chinese bird spider).